We begin with the raw amino-acid sequence, 315 residues long: Olfactory receptor 3A10 (315 aa).

Residues 1–28 are Extracellular-facing; the sequence is MEPGAWGNRTAVTDFILLGLTGNVRLQP. An N-linked (GlcNAc...) asparagine glycan is attached at asparagine 8. Residues 29 to 49 traverse the membrane as a helical segment; that stretch reads ILFVVFFFAYIVTVGGNLSIL. The Cytoplasmic portion of the chain corresponds to 50 to 68; that stretch reads AAIFVEPKLHTPMYYFLGN. Residues 69 to 89 form a helical membrane-spanning segment; sequence LSLLDIGCISVTVPPMLVCLL. Over 90-97 the chain is Extracellular; sequence AHECRVPY. The helical transmembrane segment at 98 to 118 threads the bilayer; it reads AACISQLFFFHLLAGVDCHLL. A disulfide bridge links cysteine 100 with cysteine 192. Over 119–145 the chain is Cytoplasmic; it reads TAMAYDRYLAICQPLTYSTRMSREVQG. The chain crosses the membrane as a helical span at residues 146–166; it reads TLVGICCTVSFINALTHTVAV. Over 167–200 the chain is Extracellular; that stretch reads SVLDFCGPNVVNHFYCDLPPLFQLSCSSIYLNGQ. Residues 201-221 traverse the membrane as a helical segment; that stretch reads LLFVGATFMGVVPMILISVSY. At 222–239 the chain is on the cytoplasmic side; that stretch reads AHVAAAVLRIRSTEGRKK. A helical transmembrane segment spans residues 240-260; that stretch reads AFSTCGSHLTVVCIFYGTGFF. Residues 261 to 274 lie on the Extracellular side of the membrane; it reads SYMRLGSVSASDKD. A helical membrane pass occupies residues 275-295; that stretch reads KGIGILNTILSPMLNPLIYSL. Residues 296-315 lie on the Cytoplasmic side of the membrane; sequence RNPDVQGALKRVLTGKRYPV.

Belongs to the G-protein coupled receptor 1 family.

It is found in the cell membrane. Odorant receptor. The chain is Olfactory receptor 3A10 from Mus musculus (Mouse).